A 450-amino-acid chain; its full sequence is Bifunctional protein GlmU (450 aa).

Positions 1 to 229 (MGVALIVLAA…EAETLGINTR (229 aa)) are pyrophosphorylase. UDP-N-acetyl-alpha-D-glucosamine-binding positions include 8–11 (LAAG), Lys22, Gln75, 80–81 (GT), 103–105 (YGD), Gly141, Glu155, Asn170, and Asn227. Residue Asp105 participates in Mg(2+) binding. Asn227 is a Mg(2+) binding site. A linker region spans residues 230–250 (TELAAAEQAFQARARARALED). The N-acetyltransferase stretch occupies residues 251–450 (GVTLADPATT…RARKSAKGAQ (200 aa)). UDP-N-acetyl-alpha-D-glucosamine is bound by residues Arg316 and Lys334. The active-site Proton acceptor is His346. UDP-N-acetyl-alpha-D-glucosamine-binding residues include Tyr349 and Asn360. Acetyl-CoA contacts are provided by residues Ala363, 369 to 370 (NY), Ser388, Thr406, and Arg423.

In the N-terminal section; belongs to the N-acetylglucosamine-1-phosphate uridyltransferase family. It in the C-terminal section; belongs to the transferase hexapeptide repeat family. As to quaternary structure, homotrimer. Mg(2+) serves as cofactor.

The protein resides in the cytoplasm. It catalyses the reaction alpha-D-glucosamine 1-phosphate + acetyl-CoA = N-acetyl-alpha-D-glucosamine 1-phosphate + CoA + H(+). It carries out the reaction N-acetyl-alpha-D-glucosamine 1-phosphate + UTP + H(+) = UDP-N-acetyl-alpha-D-glucosamine + diphosphate. It functions in the pathway nucleotide-sugar biosynthesis; UDP-N-acetyl-alpha-D-glucosamine biosynthesis; N-acetyl-alpha-D-glucosamine 1-phosphate from alpha-D-glucosamine 6-phosphate (route II): step 2/2. It participates in nucleotide-sugar biosynthesis; UDP-N-acetyl-alpha-D-glucosamine biosynthesis; UDP-N-acetyl-alpha-D-glucosamine from N-acetyl-alpha-D-glucosamine 1-phosphate: step 1/1. Its pathway is bacterial outer membrane biogenesis; LPS lipid A biosynthesis. Functionally, catalyzes the last two sequential reactions in the de novo biosynthetic pathway for UDP-N-acetylglucosamine (UDP-GlcNAc). The C-terminal domain catalyzes the transfer of acetyl group from acetyl coenzyme A to glucosamine-1-phosphate (GlcN-1-P) to produce N-acetylglucosamine-1-phosphate (GlcNAc-1-P), which is converted into UDP-GlcNAc by the transfer of uridine 5-monophosphate (from uridine 5-triphosphate), a reaction catalyzed by the N-terminal domain. This is Bifunctional protein GlmU from Dinoroseobacter shibae (strain DSM 16493 / NCIMB 14021 / DFL 12).